A 639-amino-acid chain; its full sequence is uncharacterized protein (639 aa).

The signal sequence occupies residues 1–16 (MLTLYLFTATCCFVCA). 2 disordered regions span residues 80 to 128 (RRRA…SDKL) and 432 to 488 (QTAT…TSRT). Polar residues-rich tracts occupy residues 108–122 (TYAT…TASP) and 432–446 (QTAT…QQQP). Residues 465–480 (HGDEPHSDGELRRESH) show a composition bias toward basic and acidic residues.

This is an uncharacterized protein from Human cytomegalovirus (strain Merlin) (HHV-5).